The primary structure comprises 97 residues: UPF0235 protein APL_1380 (97 aa).

Belongs to the UPF0235 family.

This Actinobacillus pleuropneumoniae serotype 5b (strain L20) protein is UPF0235 protein APL_1380.